The primary structure comprises 162 residues: ATP synthase subunit b (162 aa).

Residues 4–24 (INWGSIIYQLIAFCVLLWLLS) traverse the membrane as a helical segment.

The protein belongs to the ATPase B chain family. F-type ATPases have 2 components, F(1) - the catalytic core - and F(0) - the membrane proton channel. F(1) has five subunits: alpha(3), beta(3), gamma(1), delta(1), epsilon(1). F(0) has three main subunits: a(1), b(2) and c(10-14). The alpha and beta chains form an alternating ring which encloses part of the gamma chain. F(1) is attached to F(0) by a central stalk formed by the gamma and epsilon chains, while a peripheral stalk is formed by the delta and b chains.

It is found in the cell membrane. F(1)F(0) ATP synthase produces ATP from ADP in the presence of a proton or sodium gradient. F-type ATPases consist of two structural domains, F(1) containing the extramembraneous catalytic core and F(0) containing the membrane proton channel, linked together by a central stalk and a peripheral stalk. During catalysis, ATP synthesis in the catalytic domain of F(1) is coupled via a rotary mechanism of the central stalk subunits to proton translocation. Functionally, component of the F(0) channel, it forms part of the peripheral stalk, linking F(1) to F(0). The protein is ATP synthase subunit b of Halalkalibacterium halodurans (strain ATCC BAA-125 / DSM 18197 / FERM 7344 / JCM 9153 / C-125) (Bacillus halodurans).